The primary structure comprises 377 residues: O-phospho-L-seryl-tRNA:Cys-tRNA synthase (377 aa).

Residues 83 to 84 (AR), asparagine 188, and 211 to 213 (SGH) each bind pyridoxal 5'-phosphate. Residue lysine 214 is modified to N6-(pyridoxal phosphate)lysine.

This sequence belongs to the SepCysS family. In terms of assembly, homodimer. Interacts with SepRS. Requires pyridoxal 5'-phosphate as cofactor.

It catalyses the reaction O-phospho-L-seryl-tRNA(Cys) + hydrogen sulfide + H(+) = L-cysteinyl-tRNA(Cys) + phosphate. Functionally, converts O-phospho-L-seryl-tRNA(Cys) (Sep-tRNA(Cys)) to L-cysteinyl-tRNA(Cys) (Cys-tRNA(Cys)). This is O-phospho-L-seryl-tRNA:Cys-tRNA synthase from Methanothermobacter thermautotrophicus (strain ATCC 29096 / DSM 1053 / JCM 10044 / NBRC 100330 / Delta H) (Methanobacterium thermoautotrophicum).